Here is a 281-residue protein sequence, read N- to C-terminus: MKTQEIEKKVRQQDAQVLAQGYSPAIRAMEIAAIVSFVSLEVALVYRLWGTPYAGTWLLLSAVLLGYLAADFVSGFVHWMGDTWGSTEMPVLGKALIRPFREHHVDEKAITRHDFVETNGNNCLISLPVAIIALCLPMSGPGWVFCASFLGAMIFWVMATNQFHKWSHMDSPPALVGFLQRVHLILPPDHHRIHHTKPYNKYYCITVGWMNKPLTMVHFFPTAERLITWATGLLPRQDDIGAEAARALVVAAGGSEAPVVQAAKELLTQATVQEKPASTRP.

At 1-28 the chain is on the cytoplasmic side; the sequence is MKTQEIEKKVRQQDAQVLAQGYSPAIRA. The helical transmembrane segment at 29-45 threads the bilayer; that stretch reads MEIAAIVSFVSLEVALV. Topologically, residues 46–58 are periplasmic; the sequence is YRLWGTPYAGTWL. Residues 59–75 traverse the membrane as a helical segment; sequence LLSAVLLGYLAADFVSG. Topologically, residues 76-123 are cytoplasmic; that stretch reads FVHWMGDTWGSTEMPVLGKALIRPFREHHVDEKAITRHDFVETNGNNC. A helical transmembrane segment spans residues 124–138; that stretch reads LISLPVAIIALCLPM. Residues 139–142 are Periplasmic-facing; the sequence is SGPG. Residues 143-159 traverse the membrane as a helical segment; sequence WVFCASFLGAMIFWVMA. Residues 160-281 are Cytoplasmic-facing; it reads TNQFHKWSHM…VQEKPASTRP (122 aa). The Histidine box-1 motif lies at 164-168; it reads HKWSH. The short motif at 191–195 is the Histidine box-2 element; that stretch reads HRIHH.

This sequence belongs to the fatty acid desaturase CarF family. In terms of assembly, interacts with CarR.

It is found in the cell inner membrane. It catalyses the reaction a 1-(1,2-saturated alkyl)-2-acyl-sn-glycero-3-phosphoethanolamine + 2 Fe(II)-[cytochrome b5] + O2 + 2 H(+) = a 1-O-(1Z-alkenyl)-2-acyl-sn-glycero-3-phosphoethanolamine + 2 Fe(III)-[cytochrome b5] + 2 H2O. The catalysed reaction is 1-O-(13-methyltetradecyl)-2-(13-methyltetradecanoyl)-sn-glycero-3-phosphoethanolamine + 2 Fe(II)-[cytochrome b5] + O2 + 2 H(+) = 1-O-(1Z-13-methyltetradecenyl)-2-(13-methyltetradecanoyl)-sn-glycero-3-phosphoethanolamine + 2 Fe(III)-[cytochrome b5] + 2 H2O. Plasmanylethanolamine desaturase involved in plasmalogen biogenesis in the membrane, required for light-induced carotenogenesis. Plasmalogens are glycerophospholipids with a hydrocarbon chain linked by a vinyl ether bond at the glycerol sn-1 position, and are involved in antioxidative and signaling mechanisms, most precisely in sensing photooxidative stress through singlet oxygen. Participates in the light-dependent inactivation of the antisigma factor CarR. Mediates signaling by singlet oxygen, generated via photoexcited protoporphyrin IX. This is Plasmanylethanolamine desaturase from Myxococcus xanthus.